The primary structure comprises 144 residues: Putative sugar phosphate isomerase RBE_0278 (144 aa).

Substrate is bound at residue histidine 12. The active-site Proton donor is histidine 101. Substrate is bound at residue arginine 135.

Belongs to the LacAB/RpiB family.

This chain is Putative sugar phosphate isomerase RBE_0278, found in Rickettsia bellii (strain RML369-C).